The sequence spans 528 residues: U6 snRNA (guanine-N(2))-methyltransferase THUMPD2 (528 aa).

Basic and acidic residues predominate over residues 154–168 (QEVAKDHGESQEDKL). Disordered regions lie at residues 154–200 (QEVA…ADAQ) and 437–460 (MKTL…RASS). Residues 162–266 (ESQEDKLLQG…DAYSVVGIPL (105 aa)) form the THUMP domain.

Belongs to the methyltransferase superfamily. As to quaternary structure, part of the heterodimeric THUMPD2-TRM112 methyltransferase complex; this complex forms an active tRNA methyltransferase, where TRMT112 acts as an activator of the catalytic subunit THUMPD2.

It localises to the nucleus. The enzyme catalyses guanosine in U6 snRNA + S-adenosyl-L-methionine = N(2)-methylguanosine in U6 snRNA + S-adenosyl-L-homocysteine + H(+). Functionally, catalytic subunit of the THUMPD2-TRM112 methyltransferase complex, that specifically mediates the S-adenosyl-L-methionine-dependent N(2)-methylation of guanosine nucleotides, most probably at position 72 (m2G72), in the U6snRNA of the major spliceosome. This modification in the U6 snRNA affects the constitutive splicing efficiency of introns that have suboptimal splice sites and can impact final mRNA levels. The polypeptide is U6 snRNA (guanine-N(2))-methyltransferase THUMPD2 (Mus musculus (Mouse)).